Reading from the N-terminus, the 440-residue chain is Adenylosuccinate lyase (440 aa).

Residues 4 to 5, 67 to 69, and 93 to 94 contribute to the N(6)-(1,2-dicarboxyethyl)-AMP site; these read RY, KHD, and TS. His141 serves as the catalytic Proton donor/acceptor. Gln212 is a binding site for N(6)-(1,2-dicarboxyethyl)-AMP. Ser262 functions as the Proton donor/acceptor in the catalytic mechanism. N(6)-(1,2-dicarboxyethyl)-AMP-binding positions include Ser263, 268–270, Asn276, and 307–311; these read KRN and SVERF.

The protein belongs to the lyase 1 family. Adenylosuccinate lyase subfamily. Homotetramer. Residues from neighboring subunits contribute catalytic and substrate-binding residues to each active site.

The catalysed reaction is N(6)-(1,2-dicarboxyethyl)-AMP = fumarate + AMP. It carries out the reaction (2S)-2-[5-amino-1-(5-phospho-beta-D-ribosyl)imidazole-4-carboxamido]succinate = 5-amino-1-(5-phospho-beta-D-ribosyl)imidazole-4-carboxamide + fumarate. The protein operates within purine metabolism; AMP biosynthesis via de novo pathway; AMP from IMP: step 2/2. It functions in the pathway purine metabolism; IMP biosynthesis via de novo pathway; 5-amino-1-(5-phospho-D-ribosyl)imidazole-4-carboxamide from 5-amino-1-(5-phospho-D-ribosyl)imidazole-4-carboxylate: step 2/2. Its function is as follows. Catalyzes two reactions in de novo purine nucleotide biosynthesis. Catalyzes the breakdown of 5-aminoimidazole- (N-succinylocarboxamide) ribotide (SAICAR or 2-[5-amino-1-(5-phospho-beta-D-ribosyl)imidazole-4-carboxamido]succinate) to 5-aminoimidazole-4-carboxamide ribotide (AICAR or 5-amino-1-(5-phospho-beta-D-ribosyl)imidazole-4-carboxamide) and fumarate, and of adenylosuccinate (ADS or N(6)-(1,2-dicarboxyethyl)-AMP) to adenosine monophosphate (AMP) and fumarate. The sequence is that of Adenylosuccinate lyase (purB) from Helicobacter pylori (strain J99 / ATCC 700824) (Campylobacter pylori J99).